We begin with the raw amino-acid sequence, 1422 residues long: Cardiac-enriched FHL2-interacting protein (1422 aa).

The segment at 1–23 is disordered; sequence MQGNKKCADGFSDTSSIGSVLDE. Phosphothreonine is present on threonine 119. Disordered regions lie at residues 151-177, 199-265, 279-443, 459-500, 516-718, 731-850, 877-1127, 1142-1244, and 1353-1422; these read RTEA…KFAH, AGVS…GRGK, SAFE…SSPF, LETS…KAPS, YSPL…SDSQ, FSTS…TNKH, VSSE…HLER, TGAA…GWEP, and RQGS…EGVS. Residues 201–210 show a composition bias toward polar residues; the sequence is VSSTHQSSHQ. Composition is skewed to basic and acidic residues over residues 284 to 298 and 305 to 315; these read WDAH…KDIT and KAPKHYEDMPL. Phosphoserine is present on serine 327. Residues 342 to 351 are compositionally biased toward polar residues; that stretch reads SPSGIQSTSG. A compositionally biased stretch (basic and acidic residues) spans 395–405; the sequence is GPHDASEDKKQ. Polar residues predominate over residues 461-470; the sequence is TSDTQPVETS. Serine 472 carries the post-translational modification Phosphoserine. Composition is skewed to basic and acidic residues over residues 481-495, 524-537, and 579-588; these read QEKE…DSYK, GFDE…DGKQ, and PAMDSRESFA. Positions 590–606 are enriched in low complexity; that stretch reads SHPTFSSPSASSKTHFS. Basic and acidic residues-rich tracts occupy residues 611-622, 635-644, and 653-675; these read AAERNSHEKEEA, WHPDSRENLP, and CNRD…EKRL. The segment covering 731-744 has biased composition (low complexity); that stretch reads FSTSSSDQSFASFE. Positions 790–801 are enriched in basic and acidic residues; that stretch reads GVEEHRQKETQR. At serine 815 the chain carries Phosphoserine. Over residues 828–839 the composition is skewed to basic and acidic residues; sequence ADKDTALSHAKD. Composition is skewed to polar residues over residues 907–926 and 944–954; these read SESQ…STEQ and QDETSQQTRKG. Positions 975–991 are enriched in basic and acidic residues; it reads ADERLAHEKSRSADSGK. The span at 1048 to 1067 shows a compositional bias: polar residues; the sequence is AATSPNPSSLGGSSTCSPAA. A compositionally biased stretch (pro residues) spans 1087-1099; it reads PPGPGPWASPGPS. Over residues 1173-1184 the composition is skewed to basic residues; sequence RRAKKLASKRRK. Positions 1185–1202 are enriched in basic and acidic residues; sequence SDQMSEKHTEAWEGKSFT. The segment covering 1353–1366 has biased composition (polar residues); sequence RQGSSHRPQSSQGA. The span at 1411-1422 shows a compositional bias: acidic residues; the sequence is DDLEDFATEGVS.

Interacts with FHL2.

It is found in the cytoplasm. It localises to the myofibril. Its subcellular location is the sarcomere. The protein localises to the z line. Plays an important role in cardiomyocyte hypertrophy via activation of the calcineurin/NFAT signaling pathway. The chain is Cardiac-enriched FHL2-interacting protein from Rattus norvegicus (Rat).